The sequence spans 202 residues: Regulator of G-protein signaling 16 (202 aa).

2 S-palmitoyl cysteine lipidation sites follow: C2 and C12. The 117-residue stretch at 65 to 181 (SFDLLLSSKN…LKSPAYRDLA (117 aa)) folds into the RGS domain. Phosphotyrosine; by EGFR is present on Y168. Phosphotyrosine is present on Y177. The interval 183–202 (QATAASASPSSSSPAEPLHT) is disordered.

Interacts with GNAI1 and GNAQ. Interacts with GNAI3, GNAI3 and GNAO1. Post-translationally, palmitoylated on Cys-2 and/or Cys-12. In terms of processing, phosphorylated. Phosphorylation at Tyr-168 by EGFR enhances GTPase accelerating (GAP) activity toward GNAI1.

It localises to the membrane. In terms of biological role, regulates G protein-coupled receptor signaling cascades. Inhibits signal transduction by increasing the GTPase activity of G protein alpha subunits, thereby driving them into their inactive GDP-bound form. Plays an important role in the phototransduction cascade by regulating the lifetime and effective concentration of activated transducin alpha. May regulate extra and intracellular mitogenic signals. The chain is Regulator of G-protein signaling 16 (RGS16) from Bos taurus (Bovine).